A 417-amino-acid chain; its full sequence is Exodeoxyribonuclease 7 large subunit (417 aa).

This sequence belongs to the XseA family. Heterooligomer composed of large and small subunits.

Its subcellular location is the cytoplasm. It catalyses the reaction Exonucleolytic cleavage in either 5'- to 3'- or 3'- to 5'-direction to yield nucleoside 5'-phosphates.. Bidirectionally degrades single-stranded DNA into large acid-insoluble oligonucleotides, which are then degraded further into small acid-soluble oligonucleotides. The sequence is that of Exodeoxyribonuclease 7 large subunit from Helicobacter hepaticus (strain ATCC 51449 / 3B1).